Here is a 410-residue protein sequence, read N- to C-terminus: Probable peptidoglycan glycosyltransferase FtsW (410 aa).

The next 9 helical transmembrane spans lie at 39–59, 78–98, 108–128, 177–197, 198–218, 221–241, 303–323, 342–362, and 374–394; these read LDPLLIWSATGLLLIGLVMVY, YFLLRHAMFLAVGIGAGLAAF, FAPWLFLIGVMLLVVVLIPGV, GFLPMAAMILLVGFLLLGEPD, FGAFVVITAIAFGVLFLGGIN, VFALLALVAVIGFMLLIWLSP, IAEELGFAGVLTVIALFAILI, GLVAMGIGLWLGVQSFINMGV, and LPLMSFGGSGIVANCLALAIL.

The protein belongs to the SEDS family. FtsW subfamily.

The protein localises to the cell inner membrane. The catalysed reaction is [GlcNAc-(1-&gt;4)-Mur2Ac(oyl-L-Ala-gamma-D-Glu-L-Lys-D-Ala-D-Ala)](n)-di-trans,octa-cis-undecaprenyl diphosphate + beta-D-GlcNAc-(1-&gt;4)-Mur2Ac(oyl-L-Ala-gamma-D-Glu-L-Lys-D-Ala-D-Ala)-di-trans,octa-cis-undecaprenyl diphosphate = [GlcNAc-(1-&gt;4)-Mur2Ac(oyl-L-Ala-gamma-D-Glu-L-Lys-D-Ala-D-Ala)](n+1)-di-trans,octa-cis-undecaprenyl diphosphate + di-trans,octa-cis-undecaprenyl diphosphate + H(+). It participates in cell wall biogenesis; peptidoglycan biosynthesis. Peptidoglycan polymerase that is essential for cell division. In Aromatoleum aromaticum (strain DSM 19018 / LMG 30748 / EbN1) (Azoarcus sp. (strain EbN1)), this protein is Probable peptidoglycan glycosyltransferase FtsW.